A 345-amino-acid polypeptide reads, in one-letter code: UDP-N-acetylenolpyruvoylglucosamine reductase (345 aa).

Residues 25-193 (LPAHCTDFVS…VGVTFLLPKA (169 aa)) enclose the FAD-binding PCMH-type domain. Arginine 169 is a catalytic residue. The Proton donor role is filled by serine 237. The active site involves glutamate 333.

It belongs to the MurB family. The cofactor is FAD.

The protein localises to the cytoplasm. It carries out the reaction UDP-N-acetyl-alpha-D-muramate + NADP(+) = UDP-N-acetyl-3-O-(1-carboxyvinyl)-alpha-D-glucosamine + NADPH + H(+). It participates in cell wall biogenesis; peptidoglycan biosynthesis. In terms of biological role, cell wall formation. This is UDP-N-acetylenolpyruvoylglucosamine reductase from Pseudoalteromonas atlantica (strain T6c / ATCC BAA-1087).